The chain runs to 138 residues: von Willebrand factor C domain-containing protein 2-like (138 aa).

A signal peptide spans 1 to 21; sequence MALHIHEACILLLVIPGLVTS. The VWFC domain occupies 51–110; that stretch reads KGCVDDSGFVYKLGERFFPGHSNCPCVCALDGPVCDQPECPKIHPKCTKVEHNGCCPECK.

Peripherally associated with AMPAR complex. AMPAR complex consists of an inner core made of 4 pore-forming GluA/GRIA proteins (GRIA1, GRIA2, GRIA3 and GRIA4) and 4 major auxiliary subunits arranged in a twofold symmetry. One of the two pairs of distinct binding sites is occupied either by CNIH2, CNIH3 or CACNG2, CACNG3. The other harbors CACNG2, CACNG3, CACNG4, CACNG8 or GSG1L. This inner core of AMPAR complex is complemented by outer core constituents binding directly to the GluA/GRIA proteins at sites distinct from the interaction sites of the inner core constituents. Outer core constituents include at least PRRT1, PRRT2, CKAMP44/SHISA9, FRRS1L and NRN1. The proteins of the inner and outer core serve as a platform for other, more peripherally associated AMPAR constituents, including VWC2L. Alone or in combination, these auxiliary subunits control the gating and pharmacology of the AMPAR complex and profoundly impact their biogenesis and protein processing.

The protein localises to the secreted. Its subcellular location is the synapse. In terms of biological role, may play a role in neurogenesis. May play a role in bone differentiation and matrix mineralization. The protein is von Willebrand factor C domain-containing protein 2-like (VWC2L) of Macaca fascicularis (Crab-eating macaque).